The chain runs to 295 residues: Voltage-gated potassium channel (295 aa).

Topologically, residues 1-38 (MSVERWVFPGCSVMARFRRGLSDLGGRVRNIGDVMEHP) are cytoplasmic. The chain crosses the membrane as a helical span at residues 39 to 63 (LVELGVSYAALLSVIVVVVEYTMQL). The Extracellular portion of the chain corresponds to 64-67 (SGEY). The helical transmembrane segment at 68–92 (LVRLYLVDLILVIILWADYAYRAYK) threads the bilayer. Residues 93-96 (SGDP) lie on the Cytoplasmic side of the membrane. Positions 97 to 105 (AGYVKKTLY) form an intramembrane region, helical. Topologically, residues 106-108 (EIP) are extracellular. The chain crosses the membrane as a helical; Voltage-sensor span at residues 109 to 125 (ALVPAGLLALIEGHLAG). Residues 126–128 (LGL) are Cytoplasmic-facing. Residues 129–145 (FRLVRLLRFLRILLIIS) traverse the membrane as a helical; Voltage-sensor segment. Residues 146–159 (RGSKFLSAIADAAD) lie on the Cytoplasmic side of the membrane. A helical transmembrane segment spans residues 160 to 184 (KIRFYHLFGAVMLTVLYGAFAIYIV). The Extracellular segment spans residues 185–195 (EYPDPNSSIKS). Residues 196–208 (VFDALWWAVVTAT) constitute an intramembrane region (pore-forming). Positions 209–214 (TVGYGD) match the Selectivity filter motif. The Extracellular portion of the chain corresponds to 209 to 221 (TVGYGDVVPATPI). Residues 222 to 253 (GKVIGIAVMLTGISALTLLIGTVSNMFQKILV) form a helical membrane-spanning segment. Residues 254–295 (GEPEPSCSPAKLAEMVSSMSEEEFEEFVRTLKNLRRLENSMK) are Cytoplasmic-facing.

Belongs to the potassium channel family.

It is found in the cell membrane. Mediates a strong voltage-dependent potassium ion permeability of excitable membranes. Assuming opened or closed conformations in response to the voltage difference across the membrane, the protein forms a potassium-selective channel through which potassium ions may pass in accordance with their electrochemical gradient. This chain is Voltage-gated potassium channel, found in Aeropyrum pernix (strain ATCC 700893 / DSM 11879 / JCM 9820 / NBRC 100138 / K1).